The primary structure comprises 349 residues: MDKRGGMDHVLVWRQGRFSRQINLTTVGRVSLALLLVLAVMVASLGVGKLMLSPWEVLRALWSSQPEGAALIVQQLRLPRVVLAALVGGALAVSGLILQAMIRNPLASPDILGITSGASAAAVFYLSFLAATLGAHYLPLAAMIGAATAALAVYWLAWQAGVSPQRLVLTGVGVSALLMAATTFMLVFSPLTTTLSAYVWLTGSVYGASWRETRELGGWLLLIAPWLVLLARQVRVQQLDDGLAQGIGVRVQWLRVALLLLSVALAGAAIAWGGAMAFVGLIAPHIAKRLVAPGFAGQAAMAFLSGAGLVMVADLCGRTLFLPLDLPAGIFVSALGAPFFLYLLIKQRH.

10 helical membrane passes run L32–L52, V82–I102, I111–A131, L138–W158, V168–F188, P190–W210, L216–V236, V263–A283, L290–V310, and D325–I345.

This sequence belongs to the binding-protein-dependent transport system permease family. FecCD subfamily.

It localises to the cell inner membrane. Functionally, part of the binding-protein-dependent transport system CbrABCD for uptake of the siderophore achromobactin. Probably responsible for the translocation of the substrate across the membrane. The polypeptide is Achromobactin transport system permease protein CbrC (cbrC) (Dickeya dadantii (strain 3937) (Erwinia chrysanthemi (strain 3937))).